Reading from the N-terminus, the 376-residue chain is DNA replication and repair protein RecF (376 aa).

35 to 42 (GDNGSGKT) is a binding site for ATP.

It belongs to the RecF family.

Its subcellular location is the cytoplasm. In terms of biological role, the RecF protein is involved in DNA metabolism; it is required for DNA replication and normal SOS inducibility. RecF binds preferentially to single-stranded, linear DNA. It also seems to bind ATP. This chain is DNA replication and repair protein RecF, found in Agrobacterium fabrum (strain C58 / ATCC 33970) (Agrobacterium tumefaciens (strain C58)).